We begin with the raw amino-acid sequence, 53 residues long: IgW transmembrane form Tm1T3/Tm6T3/Tm3C4 (53 aa).

The disordered stretch occupies residues 1 to 25 (VQAVPPDVKGEEGKEEVEDMDGDDN). Positions 13 to 24 (GKEEVEDMDGDD) are enriched in acidic residues. Residues 29 to 49 (VAAFAILFILSFLYSTFVTVV) traverse the membrane as a helical segment.

Expressed in the spleen, pancreas, peripheral blood lymphocytes and at low levels in the epigonal organ.

The protein resides in the membrane. In Ginglymostoma cirratum (Nurse shark), this protein is IgW transmembrane form Tm1T3/Tm6T3/Tm3C4.